We begin with the raw amino-acid sequence, 435 residues long: Trigger factor (435 aa).

The PPIase FKBP-type domain occupies 161–246; it reads GKRVSIDFVG…VNKVEARELP (86 aa).

This sequence belongs to the FKBP-type PPIase family. Tig subfamily.

Its subcellular location is the cytoplasm. It carries out the reaction [protein]-peptidylproline (omega=180) = [protein]-peptidylproline (omega=0). In terms of biological role, involved in protein export. Acts as a chaperone by maintaining the newly synthesized protein in an open conformation. Functions as a peptidyl-prolyl cis-trans isomerase. This chain is Trigger factor, found in Vibrio campbellii (strain ATCC BAA-1116).